A 539-amino-acid chain; its full sequence is Nucleoporin NUP60 (539 aa).

Residues S10, S49, S81, and S89 each carry the phosphoserine modification. A disordered region spans residues 44-80 (DSARVSPRNNVANKQPRNESFNRRISSMPGGYFHSEI). A coiled-coil region spans residues 91-118 (VVSAVGEARNDIENKEEEYDETHETNIS). 4 positions are modified to phosphoserine: S162, S171, S214, and S222. Polar residues-rich tracts occupy residues 242–252 (TANTSAQSIAS) and 258–267 (SGVSKSAPSK). Disordered stretches follow at residues 242-267 (TANT…APSK), 305-329 (IRKH…TTVK), and 347-493 (NATK…GKHI). Polar residues predominate over residues 347-359 (NATKISPSAPSKD). Residues S352, S360, S374, and S382 each carry the phosphoserine modification. 2 stretches are compositionally biased toward polar residues: residues 395 to 433 (SAFN…TNLQ) and 448 to 485 (GDST…LSQE). FXF repeat units follow at residues 399–401 (FSF) and 427–429 (FNF). T460 carries the phosphothreonine modification. One copy of the FXF 3 repeat lies at 469–471 (FVF). Phosphoserine is present on residues S480 and S483. An FXF 4 repeat occupies 509 to 511 (FDF).

In terms of assembly, component of the nuclear pore complex (NPC). NPC constitutes the exclusive means of nucleocytoplasmic transport. NPCs allow the passive diffusion of ions and small molecules and the active, nuclear transport receptor-mediated bidirectional transport of macromolecules such as proteins, RNAs, ribonucleoparticles (RNPs), and ribosomal subunits across the nuclear envelope. Due to its 8-fold rotational symmetry, all subunits are present with 8 copies or multiples thereof. Binds to NUP1 and NUP2 forming the nuclear basket and the distal ring. The interaction with NUP2 is GSP1-GTP-dependent. Interacts through its FG repeats with karyopherins, such as KAP123 and KAP95-SRP1 (KAP60). Also interacts with GSP1-GTP and SRM1 (PRP20), where NUP60 reduces SRM1 activity, thus inhibiting GSP1 guanine nucleotide dissociation. In terms of processing, phosphorylated by CDC28.

It localises to the nucleus. It is found in the nuclear pore complex. The protein resides in the nucleus membrane. Functionally, functions as a component of the nuclear pore complex (NPC). NPC components, collectively referred to as nucleoporins (NUPs), can play the role of both NPC structural components and of docking or interaction partners for transiently associated nuclear transport factors. Active directional transport is assured by both, a Phe-Gly (FG) repeat affinity gradient for these transport factors across the NPC and a transport cofactor concentration gradient across the nuclear envelope (GSP1 and GSP2 GTPases associated predominantly with GTP in the nucleus, with GDP in the cytoplasm). This chain is Nucleoporin NUP60 (NUP60), found in Saccharomyces cerevisiae (strain ATCC 204508 / S288c) (Baker's yeast).